Consider the following 881-residue polypeptide: Valine--tRNA ligase (881 aa).

The 'HIGH' region signature appears at 49-59 (PNVTGKLHLGH). A 'KMSKS' region motif is present at residues 526-530 (KMSKS). Lysine 529 serves as a coordination point for ATP. Residues 810–881 (LADLINLDEE…VRQRLADLEK (72 aa)) are a coiled coil.

The protein belongs to the class-I aminoacyl-tRNA synthetase family. ValS type 1 subfamily. In terms of assembly, monomer.

Its subcellular location is the cytoplasm. The enzyme catalyses tRNA(Val) + L-valine + ATP = L-valyl-tRNA(Val) + AMP + diphosphate. Functionally, catalyzes the attachment of valine to tRNA(Val). As ValRS can inadvertently accommodate and process structurally similar amino acids such as threonine, to avoid such errors, it has a 'posttransfer' editing activity that hydrolyzes mischarged Thr-tRNA(Val) in a tRNA-dependent manner. The sequence is that of Valine--tRNA ligase from Bacillus cereus (strain ATCC 10987 / NRS 248).